We begin with the raw amino-acid sequence, 576 residues long: Aspartate--tRNA ligase (576 aa).

Glu173 is an L-aspartate binding site. The interval 197–200 (QLFK) is aspartate. Arg219 serves as a coordination point for L-aspartate. ATP is bound by residues 219-221 (RDE) and Gln228. His438 is an L-aspartate binding site. An ATP-binding site is contributed by Glu470. Arg477 provides a ligand contact to L-aspartate. 522 to 525 (GLDR) contributes to the ATP binding site.

The protein belongs to the class-II aminoacyl-tRNA synthetase family. Type 1 subfamily. Homodimer.

It localises to the cytoplasm. It catalyses the reaction tRNA(Asp) + L-aspartate + ATP = L-aspartyl-tRNA(Asp) + AMP + diphosphate. Its function is as follows. Catalyzes the attachment of L-aspartate to tRNA(Asp) in a two-step reaction: L-aspartate is first activated by ATP to form Asp-AMP and then transferred to the acceptor end of tRNA(Asp). This is Aspartate--tRNA ligase from Aster yellows witches'-broom phytoplasma (strain AYWB).